The following is a 507-amino-acid chain: MFS-type transporter acdC (507 aa).

Residues 1 to 50 (MSPNAPAVDIGAAPSLDTPEGDTKQPAEDHVEKDSNLVDWDGPDDPEHPQ) are disordered. The span at 21–36 (GDTKQPAEDHVEKDSN) shows a compositional bias: basic and acidic residues. Asparagine 51 carries N-linked (GlcNAc...) asparagine glycosylation. Residues 58 to 78 (WGITFSLASMTMWITFSSSVL) form a helical membrane-spanning segment. Asparagine 90 carries an N-linked (GlcNAc...) asparagine glycan. The next 5 helical transmembrane spans lie at 95-115 (VMPLATTLVIFGFALGPLCWA), 125-145 (LPTFLGYGVFAIFQVPVAVAP), 155-175 (FFVGVFGSSALSVGPGVMADI), 186-206 (PFFFAANLLGPILGPIIGGFI), and 215-235 (WTAWLTLITSIFFGVLALLIV). N-linked (GlcNAc...) asparagine glycosylation is present at asparagine 257. Transmembrane regions (helical) follow at residues 290-310 (PILICFTVYLSLIYGILYLFL), 328-348 (IAGLPFLGILVGMVLGIGIII), 371-391 (LVEMMLTSITMPIGLFWFGWA), 395-415 (HWMVQTIAGVPLGIGLFVLFM), 442-462 (FLGGSFPLFATAMYHNLGVDW), and 466-486 (ILGFISVAMVPIPFAFYIFGA).

It belongs to the major facilitator superfamily. CAR1 family.

It localises to the membrane. In terms of biological role, MFS-type transporter; part of the gene cluster that mediates the biosynthesis of aspcandine, a pyrrolobenzazepine alkaloid. In Aspergillus candidus, this protein is MFS-type transporter acdC.